Consider the following 99-residue polypeptide: Aspartyl/glutamyl-tRNA(Asn/Gln) amidotransferase subunit C (99 aa).

The protein belongs to the GatC family. In terms of assembly, heterotrimer of A, B and C subunits.

The enzyme catalyses L-glutamyl-tRNA(Gln) + L-glutamine + ATP + H2O = L-glutaminyl-tRNA(Gln) + L-glutamate + ADP + phosphate + H(+). It catalyses the reaction L-aspartyl-tRNA(Asn) + L-glutamine + ATP + H2O = L-asparaginyl-tRNA(Asn) + L-glutamate + ADP + phosphate + 2 H(+). Its function is as follows. Allows the formation of correctly charged Asn-tRNA(Asn) or Gln-tRNA(Gln) through the transamidation of misacylated Asp-tRNA(Asn) or Glu-tRNA(Gln) in organisms which lack either or both of asparaginyl-tRNA or glutaminyl-tRNA synthetases. The reaction takes place in the presence of glutamine and ATP through an activated phospho-Asp-tRNA(Asn) or phospho-Glu-tRNA(Gln). This chain is Aspartyl/glutamyl-tRNA(Asn/Gln) amidotransferase subunit C, found in Burkholderia cenocepacia (strain ATCC BAA-245 / DSM 16553 / LMG 16656 / NCTC 13227 / J2315 / CF5610) (Burkholderia cepacia (strain J2315)).